A 1091-amino-acid chain; its full sequence is Constitutive coactivator of PPAR-gamma-like protein 2 (1091 aa).

A compositionally biased stretch (low complexity) spans 35 to 53 (QQQHLHRQLPPAALAPGAP). Disordered stretches follow at residues 35–105 (QQQH…HPPP), 503–575 (NCLT…SEPH), 966–1010 (SRSS…QGSS), and 1037–1077 (VEEK…KNHV). At Arg57 the chain carries Omega-N-methylarginine. The span at 82–95 (SRHHHPAHHFHHHG) shows a compositional bias: basic residues. A compositionally biased stretch (polar residues) spans 532 to 544 (GSEQITEAVQQQP). A compositionally biased stretch (low complexity) spans 966 to 976 (SRSSRSRGSFG). Omega-N-methylarginine is present on Arg972. Basic and acidic residues predominate over residues 1062-1077 (SDDHCLPVKNGEKNHV).

Belongs to the constitutive coactivator of PPAR-gamma family.

In Mus musculus (Mouse), this protein is Constitutive coactivator of PPAR-gamma-like protein 2 (Fam120c).